The chain runs to 307 residues: sn-1-specific diacylglycerol lipase ABHD11 (307 aa).

The transit peptide at 1–34 (MLRWARAWRVPRGVLGASSPRRLAVPVTFCSSRS) directs the protein to the mitochondrion. Lysine 79 is modified (N6-succinyllysine). Serine 133 functions as the Charge relay system in the catalytic mechanism. Lysine 196 is modified (N6-succinyllysine). Active-site charge relay system residues include aspartate 229 and histidine 288.

It belongs to the AB hydrolase superfamily. In terms of assembly, interacts with OGDH and DLST; this interaction maintains the functional lipoylation of the 2-oxoglutarate dehydrogenase complex. In terms of processing, phosphorylated. Expressed in white adipose tissues.

It is found in the mitochondrion. Its subcellular location is the mitochondrion matrix. The catalysed reaction is 1-octadecanoyl-2-(5Z,8Z,11Z,14Z-eicosatetraenoyl)-sn-glycerol + H2O = 2-(5Z,8Z,11Z,14Z-eicosatetraenoyl)-glycerol + octadecanoate + H(+). The enzyme catalyses a 1,2-diacyl-sn-glycerol + H2O = a 2-acylglycerol + a fatty acid + H(+). It catalyses the reaction a 1,3-diacyl-sn-glycerol + H2O = a 1-acyl-sn-glycerol + a fatty acid + H(+). It carries out the reaction 1-octadecanoyl-2-(9Z-octadecenoyl)-sn-glycerol + H2O = 2-(9Z-octadecenoyl)-glycerol + octadecanoate + H(+). The catalysed reaction is 1-octadecanoyl-2-(4Z,7Z,10Z,13Z,16Z,19Z-docosahexaenoyl)-sn-glycerol + H2O = 2-(4Z,7Z,10Z,13Z,16Z,19Z-docosahexaenoyl)-glycerol + octadecanoate + H(+). The enzyme catalyses 1,2-didecanoylglycerol + H2O = decanoylglycerol + decanoate + H(+). Its function is as follows. Catalyzes the hydrolysis of diacylglycerol in vitro and may function as a key regulator in lipid metabolism, namely by regulating the intracellular levels of diacylglycerol. 1,2-diacyl-sn-glycerols are the preferred substrate over 1,3-diacyl-sn-glycerols. The enzyme hydrolyzes stearate in preference to palmitate from the sn-1 position of 1,2-diacyl-sn-glycerols. Maintains the functional lipoylation of the 2-oxoglutarate dehydrogenase complex (OGDHc) through its interaction with the OGDHc by preventing the formation of lipoyl adducts. In addition, is also required for the expansion and differentiation of embryonic stem cells (ESCs). In Mus musculus (Mouse), this protein is sn-1-specific diacylglycerol lipase ABHD11.